Here is a 93-residue protein sequence, read N- to C-terminus: Small ribosomal subunit protein uS17 (93 aa).

The protein belongs to the universal ribosomal protein uS17 family. In terms of assembly, part of the 30S ribosomal subunit.

One of the primary rRNA binding proteins, it binds specifically to the 5'-end of 16S ribosomal RNA. The sequence is that of Small ribosomal subunit protein uS17 from Bordetella bronchiseptica (strain ATCC BAA-588 / NCTC 13252 / RB50) (Alcaligenes bronchisepticus).